A 130-amino-acid chain; its full sequence is Holo-[acyl-carrier-protein] synthase (130 aa).

2 residues coordinate Mg(2+): Asp8 and Glu62.

Belongs to the P-Pant transferase superfamily. AcpS family. The cofactor is Mg(2+).

It localises to the cytoplasm. It catalyses the reaction apo-[ACP] + CoA = holo-[ACP] + adenosine 3',5'-bisphosphate + H(+). Transfers the 4'-phosphopantetheine moiety from coenzyme A to a Ser of acyl-carrier-protein. In Polynucleobacter asymbioticus (strain DSM 18221 / CIP 109841 / QLW-P1DMWA-1) (Polynucleobacter necessarius subsp. asymbioticus), this protein is Holo-[acyl-carrier-protein] synthase.